The following is a 79-amino-acid chain: D-alanyl carrier protein (79 aa).

The region spanning 1–77 is the Carrier domain; it reads MSTKETVIDL…KIIQGIEELQ (77 aa). Serine 35 carries the post-translational modification O-(pantetheine 4'-phosphoryl)serine.

Belongs to the DltC family. In terms of processing, 4'-phosphopantetheine is transferred from CoA to a specific serine of apo-DCP.

The protein localises to the cytoplasm. It functions in the pathway cell wall biogenesis; lipoteichoic acid biosynthesis. Carrier protein involved in the D-alanylation of lipoteichoic acid (LTA). The loading of thioester-linked D-alanine onto DltC is catalyzed by D-alanine--D-alanyl carrier protein ligase DltA. The DltC-carried D-alanyl group is further transferred to cell membrane phosphatidylglycerol (PG) by forming an ester bond, probably catalyzed by DltD. D-alanylation of LTA plays an important role in modulating the properties of the cell wall in Gram-positive bacteria, influencing the net charge of the cell wall. The chain is D-alanyl carrier protein from Streptococcus equi subsp. equi (strain 4047).